The following is a 156-amino-acid chain: MSRKKQAPVRNVLADPVFNSKLITKAINCTMLEGKKTTAQNILYSAFKLVEEKLQKDALEVFRQAVKNVTPLTEVRSRRIGGTNYQVPMEVRQKRQQTLALRWLILFARKRNEKTMIVKLANEIIDAYNKTGGAFKKKEDTHKMAEANRAFAHFKW.

It belongs to the universal ribosomal protein uS7 family. As to quaternary structure, part of the 30S ribosomal subunit. Contacts proteins S9 and S11.

In terms of biological role, one of the primary rRNA binding proteins, it binds directly to 16S rRNA where it nucleates assembly of the head domain of the 30S subunit. Is located at the subunit interface close to the decoding center, probably blocks exit of the E-site tRNA. In Mesomycoplasma hyopneumoniae (strain 232) (Mycoplasma hyopneumoniae), this protein is Small ribosomal subunit protein uS7.